The following is a 129-amino-acid chain: Small ribosomal subunit protein uS11 (129 aa).

Belongs to the universal ribosomal protein uS11 family. Part of the 30S ribosomal subunit. Interacts with proteins S7 and S18. Binds to IF-3.

In terms of biological role, located on the platform of the 30S subunit, it bridges several disparate RNA helices of the 16S rRNA. Forms part of the Shine-Dalgarno cleft in the 70S ribosome. This is Small ribosomal subunit protein uS11 from Bartonella henselae (strain ATCC 49882 / DSM 28221 / CCUG 30454 / Houston 1) (Rochalimaea henselae).